The sequence spans 243 residues: 35 kDa gas vesicle protein (243 aa).

It belongs to the gas vesicle GvpC family.

The protein resides in the gas vesicle shell. Its function is as follows. May confer stability to the gas vesicle shells. Gas vesicles are small, hollow, gas filled protein structures that are found in several microbial planktonic microorganisms. They allow the positioning of the organism at the favorable depth for growth. The protein is 35 kDa gas vesicle protein of Dactylococcopsis salina (strain PCC 8305) (Myxobactron salinum).